The primary structure comprises 538 residues: Low affinity inorganic phosphate transporter 3 (538 aa).

Residues 1–24 (MAKDQLQVLNALDVAKTQLYHFTA) are Cytoplasmic-facing. The helical transmembrane segment at 25 to 45 (IVIAGMGFFTDAYDLFCISLV) threads the bilayer. Over 46 to 70 (TKLLGRIYYFHEGAPKPGILPSGIS) the chain is Extracellular. Residues 71-91 (AAVNGVAFIGTLSGQLFFGWL) traverse the membrane as a helical segment. The Cytoplasmic portion of the chain corresponds to 92-99 (GDKLGRKK). The chain crosses the membrane as a helical span at residues 100-120 (VYGMTLMLMVICSIACGLSFG). The Extracellular segment spans residues 121-122 (KT). A helical transmembrane segment spans residues 123–143 (ANGVIATLCFFRFWLGFGIGG). The Cytoplasmic portion of the chain corresponds to 144-164 (DYPLSATIMSEYANKKTRGAF). Residues 165 to 185 (IAAVFAMQGFGILAGGIVALI) traverse the membrane as a helical segment. Topologically, residues 186–211 (VSAGFKNAYPAPTYSAHGKDSTPPEA) are extracellular. The chain crosses the membrane as a helical span at residues 212–232 (DYVWRIIVMIGALPALLTYYW). At 233-292 (RMKMPETARYTALVAKNTVKAAADMSKVLNVEIEEDKATVEKIEENGNSFGLFSKEFLRR) the chain is on the cytoplasmic side. A helical membrane pass occupies residues 293–313 (HGLHLLGTTSTWFLLDIAFYS). Over 314-345 (QNLFQKDIFSKIGWIPPPETMNALDEVFRIAR) the chain is Extracellular. A helical transmembrane segment spans residues 346-366 (AQTLIALCSTVPGYWFTVAFI). Over 367–371 (DKMGR) the chain is Cytoplasmic. A helical transmembrane segment spans residues 372-392 (FAIQLMGSFFMTVFMFALAIP). At 393-402 (YDHWTKKENR) the chain is on the extracellular side. The chain crosses the membrane as a helical span at residues 403 to 423 (IGFVIMYSLTFFFANFGPNAT). The Cytoplasmic portion of the chain corresponds to 424 to 442 (TFVVPAEIFPARLRSTCHG). Residues 443–463 (ISAAAGKAGAIVGAFGFLYAA) traverse the membrane as a helical segment. Over 464 to 483 (QSTDPKKVDAGYPTGIGVKN) the chain is Extracellular. Residues 484–504 (ALIVLGCVNFLGMLSTLLVPE) traverse the membrane as a helical segment. At 505–538 (SKGKSLEEMSKENEGEEENYGTETKGENAQTVPV) the chain is on the cytoplasmic side. Residues 506-517 (KGKSLEEMSKEN) show a composition bias toward basic and acidic residues. Residues 506–538 (KGKSLEEMSKENEGEEENYGTETKGENAQTVPV) are disordered.

This sequence belongs to the major facilitator superfamily. Phosphate:H(+) symporter (TC 2.A.1.9) family. In terms of tissue distribution, expressed at low levels in non-mycorrhized roots.

It localises to the cell membrane. It carries out the reaction phosphate(in) + H(+)(in) = phosphate(out) + H(+)(out). Its function is as follows. Low-affinity transporter for external inorganic phosphate (Pi) probably involved in the acquisition of phosphate released by arbuscular mycorrhizal (AM) fungi during AM symbiosis. The sequence is that of Low affinity inorganic phosphate transporter 3 from Petunia hybrida (Petunia).